The chain runs to 288 residues: Orotidine 5'-phosphate decarboxylase (288 aa).

Lys-97 (proton donor) is an active-site residue.

It belongs to the OMP decarboxylase family. Type 2 subfamily.

It catalyses the reaction orotidine 5'-phosphate + H(+) = UMP + CO2. Its pathway is pyrimidine metabolism; UMP biosynthesis via de novo pathway; UMP from orotate: step 2/2. This chain is Orotidine 5'-phosphate decarboxylase, found in Clostridium tetani (strain Massachusetts / E88).